Here is a 339-residue protein sequence, read N- to C-terminus: MTVRVAINGFGRIGRNVVRALYESGRRAEITVVAINELADAAGMAHLLKYDTSHGRFAWEVRQERDQLCVGDDAIRVLHERSLQSLPWRELGVDVVLDCTGVYGSREHGEAHIAAGAKKVLFSHPGSNDLDATVVYGVNQDQLRAEHRIVSNASCTTNCIIPVIKLLDDAYGIESGTVTTIHSAMHDQQVIDAYHPDLRRTRAASQSIIPVDTKLAAGITRFFPQFNDRFEAIAVRVPTINVTAIDLSVTVKKPVKANEVNLLLQKAAQGAFHGIVDYTELPLVSVDFNHDPHSAIVDGTQTRVSGAHLIKTLVWCDNEWGFANRMLDTTLAMATVAFR.

NAD(+) contacts are provided by residues 12–13 (RI) and R81. Substrate-binding positions include 154–156 (SCT), R200, 213–214 (TK), and R236. C155 serves as the catalytic Nucleophile. N318 contributes to the NAD(+) binding site.

The protein belongs to the glyceraldehyde-3-phosphate dehydrogenase family. Epd subfamily. As to quaternary structure, homotetramer.

The protein resides in the cytoplasm. It carries out the reaction D-erythrose 4-phosphate + NAD(+) + H2O = 4-phospho-D-erythronate + NADH + 2 H(+). It participates in cofactor biosynthesis; pyridoxine 5'-phosphate biosynthesis; pyridoxine 5'-phosphate from D-erythrose 4-phosphate: step 1/5. In terms of biological role, catalyzes the NAD-dependent conversion of D-erythrose 4-phosphate to 4-phosphoerythronate. The sequence is that of D-erythrose-4-phosphate dehydrogenase from Escherichia fergusonii (strain ATCC 35469 / DSM 13698 / CCUG 18766 / IAM 14443 / JCM 21226 / LMG 7866 / NBRC 102419 / NCTC 12128 / CDC 0568-73).